The sequence spans 357 residues: tRNA N6-adenosine threonylcarbamoyltransferase (357 aa).

Residues histidine 116 and histidine 120 each coordinate Fe cation. Substrate is bound by residues 139 to 143 (LVSGG), aspartate 172, glycine 185, and asparagine 284. Aspartate 312 lines the Fe cation pocket.

Belongs to the KAE1 / TsaD family. Fe(2+) serves as cofactor.

The protein resides in the cytoplasm. It carries out the reaction L-threonylcarbamoyladenylate + adenosine(37) in tRNA = N(6)-L-threonylcarbamoyladenosine(37) in tRNA + AMP + H(+). Its function is as follows. Required for the formation of a threonylcarbamoyl group on adenosine at position 37 (t(6)A37) in tRNAs that read codons beginning with adenine. Is involved in the transfer of the threonylcarbamoyl moiety of threonylcarbamoyl-AMP (TC-AMP) to the N6 group of A37, together with TsaE and TsaB. TsaD likely plays a direct catalytic role in this reaction. The chain is tRNA N6-adenosine threonylcarbamoyltransferase from Synechococcus sp. (strain CC9605).